A 76-amino-acid chain; its full sequence is Large ribosomal subunit protein eL20 (76 aa).

Belongs to the eukaryotic ribosomal protein eL20 family. In terms of assembly, part of the 50S ribosomal subunit. Binds 23S rRNA.

This is Large ribosomal subunit protein eL20 from Methanococcus maripaludis (strain C7 / ATCC BAA-1331).